Here is a 589-residue protein sequence, read N- to C-terminus: MLRLLALFLHCLPLVSGDYDICKSWVTTDEGPTWEFYACQPKVMRLKDYVKVKVEPSGITCGDPPERFCSHENPYLCSNECDASNPDLAHPPRLMFDREDEGLATYWQSVTWSRYPSPLEANITLSWNKSVELTDDVVVTFEYGRPTVMVLEKSLDNGRTWQPYQFYAEDCMEAFGMSARRARDMSPSSAHRVLCTEEYSRWAGSKKEKHVRFEVRDRFAIFAGPDLRNMDNLYTRMESAKGLKEFFTFTDLRMRLLRPALGGTYVQRENLYKYFYAISNIEVIGRCKCNLHANLCTVREGSLQCECEHNTTGPDCGRCKKNFRTRAWRAGSYLPLPHGSPNACAAAGSAFGSQTKPPTMAPLGDSSFWPQVSSSAEAVAISVAVPSQAKDSTLFELKPRSPQVIPIEEFQDCECYGHSNRCSYIDFLNVVTCVSCKHNTRGQHCQHCRLGYYRNGSAELDDENVCIECNCNQIGSVHDRCNETGFCECREGAVGPKCDDCLPTHYWRQGCYPNVCDDDQLLCQNGGTCQQNQRCACPPGYTGIRCEQPRCDLADDAGPDCDRAPGIVPRPDTLLGCLLLLGLAARLAC.

A signal peptide spans 1-17; sequence MLRLLALFLHCLPLVSG. Disulfide bonds link C22-C39, C61-C81, and C69-C77. The 252-residue stretch at 35–286 folds into the Laminin N-terminal domain; that stretch reads EFYACQPKVM…AISNIEVIGR (252 aa). The tract at residues 69–88 is NGL discriminant loop I; sequence CSHENPYLCSNECDASNPDL. N-linked (GlcNAc...) asparagine glycans are attached at residues N122 and N128. The cysteines at positions 171 and 195 are disulfide-linked. Residues 201–203 form an NGL discriminant loop II region; sequence RWA. The segment at 264 to 267 is NGL discriminant loop III; the sequence is TYVQ. 15 disulfide bridges follow: C287–C296, C289–C305, C307–C316, C319–C344, C413–C422, C415–C433, C436–C445, C448–C466, C469–C481, C471–C487, C489–C498, C501–C511, C516–C529, C523–C535, and C537–C546. 3 consecutive Laminin EGF-like domains span residues 287-346, 413-468, and 469-513; these read CKCN…ACAA, CECY…VCIE, and CNCN…GCYP. N-linked (GlcNAc...) asparagine glycosylation is present at N310. N-linked (GlcNAc...) asparagine glycosylation occurs at N455. N482 is a glycosylation site (N-linked (GlcNAc...) asparagine). G566 is lipidated: GPI-anchor amidated glycine. Positions 567–589 are cleaved as a propeptide — removed in mature form; the sequence is IVPRPDTLLGCLLLLGLAARLAC.

As to quaternary structure, interacts with LRRC4. In terms of processing, N-glycosylated. In terms of tissue distribution, expression is restricted primarily to neurons of the CNS, particularly in the cerebral cortex, habenular nucleus and superior colliculus. Low levels in lung, kidney, heart and spleen.

The protein localises to the cell membrane. Involved in controlling patterning and neuronal circuit formation at the laminar, cellular, subcellular and synaptic levels. Promotes neurite outgrowth of both axons and dendrites. This Mus musculus (Mouse) protein is Netrin-G2 (Ntng2).